A 352-amino-acid chain; its full sequence is C-C chemokine receptor type 5 (352 aa).

The Extracellular segment spans residues 1–30 (MDYQVSSPTYDIDYYTSEPCQKVNVKQIAA). A Sulfotyrosine modification is found at tyrosine 3. O-linked (GalNAc...) serine glycosylation is found at serine 6 and serine 7. Residues tyrosine 10, tyrosine 14, and tyrosine 15 each carry the sulfotyrosine modification. 2 disulfides stabilise this stretch: cysteine 20–cysteine 269 and cysteine 101–cysteine 178. Residues 31-58 (RLLPPLYSLVFIFGFVGNILVVLILINC) traverse the membrane as a helical segment. Topologically, residues 59–68 (KRLKSMTDIY) are cytoplasmic. A helical transmembrane segment spans residues 69–89 (LLNLAISDLFFLLTVPFWAHY). The Extracellular segment spans residues 90 to 102 (AAAQWDFGNTMCQ). The helical transmembrane segment at 103–124 (LLTGLYFIGFFSGIFFIILLTI) threads the bilayer. Topologically, residues 125–141 (DRYLAIVHAVFALKART) are cytoplasmic. The helical transmembrane segment at 142 to 166 (VTFGVVTSVITWVVAVFASLPGIIF) threads the bilayer. Residues 167-198 (TRSQREGLHYTCSSHFPYSQYQFWKNFQTLKI) are Extracellular-facing. The chain crosses the membrane as a helical span at residues 199-218 (VILGLVLPLLVMVICYSGIL). Topologically, residues 219-235 (KTLLRCRNEKKRHRAVR) are cytoplasmic. A helical transmembrane segment spans residues 236 to 260 (LIFTIMIVYFLFWAPYNIVLLLNTF). Topologically, residues 261 to 277 (QEFFGLNNCSSSNRLDQ) are extracellular. A helical membrane pass occupies residues 278 to 301 (AMQVTETLGMTHCCINPIIYAFVG). Residues 302–352 (EKFRNYLLVFFQKHIAKRFCKCCSIFQQEAPERASSVYTRSTGEQETSVGL) are Cytoplasmic-facing. Residues cysteine 321, cysteine 323, and cysteine 324 are each lipidated (S-palmitoyl cysteine). Serine 336, serine 337, serine 342, and serine 349 each carry phosphoserine; by BARK1.

The protein belongs to the G-protein coupled receptor 1 family. Interacts with PRAF2. Efficient ligand binding to CCL3/MIP-1alpha and CCL4/MIP-1beta requires sulfation, O-glycosylation and sialic acid modifications. Glycosylation on Ser-6 is required for efficient binding of CCL4. Interacts with GRK2. Interacts with ARRB1 and ARRB2. Interacts with CNIH4. Interacts with S100A4; this interaction stimulates T-lymphocyte chemotaxis. In terms of processing, sulfated on at least 2 of the N-terminal tyrosines. Sulfation is required for efficient binding of the chemokines, CCL3 and CCL4. Palmitoylation in the C-terminal is important for cell surface expression. Post-translationally, phosphorylation on serine residues in the C-terminal is stimulated by binding CC chemokines especially by APO-RANTES. In terms of processing, O-glycosylated, but not N-glycosylated. Ser-6 appears to be the major site even if Ser-7 may be also O-glycosylated. Also sialylated glycans present which contribute to chemokine binding. Thr-16 and Ser-17 may also be glycosylated and, if so, with small moieties such as a T-antigen.

It is found in the cell membrane. Its function is as follows. Receptor for a number of inflammatory CC-chemokines including CCL3/MIP-1-alpha, CCL4/MIP-1-beta and RANTES and subsequently transduces a signal by increasing the intracellular calcium ion level. May play a role in the control of granulocytic lineage proliferation or differentiation. Participates in T-lymphocyte migration to the infection site by acting as a chemotactic receptor. The protein is C-C chemokine receptor type 5 (CCR5) of Trachypithecus francoisi (Francois' leaf monkey).